Consider the following 426-residue polypeptide: High affinity 3',5'-cyclic-AMP phosphodiesterase 7A (426 aa).

The PDEase domain maps to 80 to 402; it reads LDEDYNGQAK…ASWKGLQRQQ (323 aa). Catalysis depends on His156, which acts as the Proton donor. A divalent metal cation contacts are provided by His160, His196, Asp197, and Asp306.

The protein belongs to the cyclic nucleotide phosphodiesterase family. PDE7 subfamily. As to quaternary structure, interacts with CBFA2T3. A divalent metal cation serves as cofactor.

It is found in the cytoplasm. Its subcellular location is the cytosol. It catalyses the reaction 3',5'-cyclic AMP + H2O = AMP + H(+). It participates in purine metabolism; 3',5'-cyclic AMP degradation; AMP from 3',5'-cyclic AMP: step 1/1. In terms of biological role, hydrolyzes the second messenger cAMP, which is a key regulator of many important physiological processes. May have a role in muscle signal transduction. This Rattus norvegicus (Rat) protein is High affinity 3',5'-cyclic-AMP phosphodiesterase 7A (Pde7a).